A 218-amino-acid chain; its full sequence is UPF0502 protein Shewana3_1622 (218 aa).

The protein belongs to the UPF0502 family.

This chain is UPF0502 protein Shewana3_1622, found in Shewanella sp. (strain ANA-3).